A 444-amino-acid polypeptide reads, in one-letter code: Protein CPn_0808/CP_1063/CPj0808/CpB0837 (444 aa).

A compositionally biased stretch (polar residues) spans 1-13 (MTSGVSGSSSQDP). Positions 1 to 124 (MTSGVSGSSS…NNYDSPSLPT (124 aa)) are disordered. Low complexity predominate over residues 15–24 (LAAQLAQSSQ). Over residues 25-42 (KAGNAQSGHDTKNVTKQG) the composition is skewed to polar residues. The segment covering 77-86 (SKGEKSEKSG) has biased composition (basic and acidic residues). Residues 88–103 (SKSSTSVASASETATA) are compositionally biased toward low complexity. Over residues 113–124 (RQNNYDSPSLPT) the composition is skewed to polar residues.

This sequence belongs to the chlamydial CPn_0808/CT_579/TC_0868 family.

The chain is Protein CPn_0808/CP_1063/CPj0808/CpB0837 from Chlamydia pneumoniae (Chlamydophila pneumoniae).